Reading from the N-terminus, the 548-residue chain is Chaperonin GroEL (548 aa).

Residues 30–33 (TLGP), lysine 51, 87–91 (DGTTT), glycine 415, and aspartate 495 contribute to the ATP site.

This sequence belongs to the chaperonin (HSP60) family. Forms a cylinder of 14 subunits composed of two heptameric rings stacked back-to-back. Interacts with the co-chaperonin GroES.

The protein resides in the cytoplasm. The catalysed reaction is ATP + H2O + a folded polypeptide = ADP + phosphate + an unfolded polypeptide.. Functionally, together with its co-chaperonin GroES, plays an essential role in assisting protein folding. The GroEL-GroES system forms a nano-cage that allows encapsulation of the non-native substrate proteins and provides a physical environment optimized to promote and accelerate protein folding. The protein is Chaperonin GroEL of Pseudoalteromonas atlantica (strain T6c / ATCC BAA-1087).